Consider the following 87-residue polypeptide: Conotoxin Bt15a (87 aa).

Positions 1-23 are cleaved as a signal peptide; the sequence is MEKLTILVLVATVLLAIQVLVQS. Positions 24 to 49 are excised as a propeptide; that stretch reads DGEKPLKRRVKQYAAKRLSALMRGPR. At Gln50 the chain carries Pyrrolidone carboxylic acid.

The protein belongs to the conotoxin O2 superfamily. Post-translationally, contains 4 disulfide bonds. In terms of tissue distribution, expressed by the venom duct.

The protein localises to the secreted. The protein is Conotoxin Bt15a of Conus betulinus (Beech cone).